The chain runs to 831 residues: Glucan 1,3-beta-glucosidase D (831 aa).

A compositionally biased stretch (basic and acidic residues) spans 1 to 21 (MPSQSRSRDRYGRDSDRDRSR). Disordered regions lie at residues 1-246 (MPSQ…RGQS) and 261-288 (APDM…SDGS). Residues 1–300 (MPSQSRSRDR…LTPFWKRKKW (300 aa)) lie on the Cytoplasmic side of the membrane. Residues 32–41 (EDDDDDDDFD) show a composition bias toward acidic residues. Basic and acidic residues-rich tracts occupy residues 42 to 70 (DNPR…HDDY), 78 to 94 (EPRR…ERAR), and 151 to 177 (DAAR…HKST). Low complexity predominate over residues 178 to 195 (DSSNSSAGLLNANALAKL). 2 stretches are compositionally biased toward basic and acidic residues: residues 197 to 216 (AQHE…EAKA) and 275 to 286 (PPRERRWEKDSD). A helical; Signal-anchor for type II membrane protein transmembrane segment spans residues 301-321 (WWIGAIVLVIVVIIIVVAVVV). At 322-831 (SNNKKSDSDS…PSFGNLPEYY (510 aa)) the chain is on the extracellular side. Residues 325–360 (KKSDSDSDSDSNSGSSDSWGGDKSSLNGLDHDSIPK) are disordered. Over residues 334–350 (DSNSGSSDSWGGDKSSL) the composition is skewed to low complexity. 3 N-linked (GlcNAc...) asparagine glycosylation sites follow: asparagine 379, asparagine 396, and asparagine 547. Glutamate 598 (proton donor) is an active-site residue. N-linked (GlcNAc...) asparagine glycosylation is found at asparagine 611, asparagine 637, asparagine 670, and asparagine 690. The active-site Nucleophile is glutamate 703.

It belongs to the glycosyl hydrolase 5 (cellulase A) family.

It localises to the cell membrane. It carries out the reaction Successive hydrolysis of beta-D-glucose units from the non-reducing ends of (1-&gt;3)-beta-D-glucans, releasing alpha-glucose.. Functionally, glucosidase involved in the degradation of cellulosic biomass. Active on lichenan. The chain is Glucan 1,3-beta-glucosidase D (exgD) from Emericella nidulans (strain FGSC A4 / ATCC 38163 / CBS 112.46 / NRRL 194 / M139) (Aspergillus nidulans).